The chain runs to 360 residues: MFVDSVEIIIASGKGGPGMVSFRREKFVIKGGPDGGDGGDGGDVYFEVDNNTDTLASFRGTKHHKAKNGAPGGTRNCTGKKGEDKIIVVPPGTQVFVDDTLWLDLVEPKKRVLALKGGKGGLGNAHFKGATKQQPTYAQKGLEGVEKCVRLELKLIADIGLVGFPNAGKSTLISTISNAKPKIANYEFTTLVPNLGVVSVDEKSGFLMADIPGIIEGASQGKGLGISFLKHIERTKVLAFVLDASRLDLGIKEQYQRLRLELEKFSPALANKPFGVLLNKCDVVENIDKMTRDFCAFLNLEAQKLEAFDLEPYSGFLHPHLTSDFENDPNEKSALFVLPLSAVSALNAHALKFVLLKALQ.

The Obg domain maps to 1–156 (MFVDSVEIII…KCVRLELKLI (156 aa)). Residues 157–360 (ADIGLVGFPN…LKFVLLKALQ (204 aa)) form the OBG-type G domain. GTP is bound by residues 163–170 (GFPNAGKS), 188–192 (FTTLV), 210–213 (DIPG), 279–282 (NKCD), and 341–343 (SAV). Mg(2+) is bound by residues S170 and T190.

It belongs to the TRAFAC class OBG-HflX-like GTPase superfamily. OBG GTPase family. Monomer. Requires Mg(2+) as cofactor.

Its subcellular location is the cytoplasm. Its function is as follows. An essential GTPase which binds GTP, GDP and possibly (p)ppGpp with moderate affinity, with high nucleotide exchange rates and a fairly low GTP hydrolysis rate. Plays a role in control of the cell cycle, stress response, ribosome biogenesis and in those bacteria that undergo differentiation, in morphogenesis control. The sequence is that of GTPase Obg from Helicobacter pylori (strain P12).